The chain runs to 295 residues: Malonyl-[acyl-carrier protein] O-methyltransferase (295 aa).

It belongs to the methyltransferase superfamily.

It catalyses the reaction malonyl-[ACP] + S-adenosyl-L-methionine = malonyl-[ACP] methyl ester + S-adenosyl-L-homocysteine. Its pathway is cofactor biosynthesis; biotin biosynthesis. Converts the free carboxyl group of a malonyl-thioester to its methyl ester by transfer of a methyl group from S-adenosyl-L-methionine (SAM). It allows to synthesize pimeloyl-ACP via the fatty acid synthetic pathway. In Xylella fastidiosa (strain M23), this protein is Malonyl-[acyl-carrier protein] O-methyltransferase.